The chain runs to 221 residues: MNSHSTDKRKKITRIGIGGPVGSGKTAIIEVITPILIKRGIKPLIITNDIVTTEDAKQVKRTLKGILDEEKILGVETGACPHTAVREDPSMNIAAVEEMEERFPDSDLIMIESGGDNLTLTFSPALADFYIYVIDVAEGEKIPRKNGPGLVQADILVINKIDLAPYVGASLDVMESDTKVVRGERPYILTNCKTGQGIEELVDMIMRDFLFTHVQPQGEHA.

A GTP-binding site is contributed by 19–26 (GPVGSGKT).

Belongs to the SIMIBI class G3E GTPase family. UreG subfamily. Homodimer. UreD, UreF and UreG form a complex that acts as a GTP-hydrolysis-dependent molecular chaperone, activating the urease apoprotein by helping to assemble the nickel containing metallocenter of UreC. The UreE protein probably delivers the nickel.

It localises to the cytoplasm. Its function is as follows. Facilitates the functional incorporation of the urease nickel metallocenter. This process requires GTP hydrolysis, probably effectuated by UreG. The protein is Urease accessory protein UreG of Yersinia enterocolitica serotype O:8 / biotype 1B (strain NCTC 13174 / 8081).